The primary structure comprises 114 residues: T cell receptor beta variable 4-1 (114 aa).

Positions 1 to 21 (MGCRLLCCAVLCLLGAVPIDT) are cleaved as a signal peptide. Positions 22–114 (EVTQTPKHLV…SALYLCASSQ (93 aa)) constitute an Ig-like domain. Cysteine 42 and cysteine 110 form a disulfide bridge. N-linked (GlcNAc...) asparagine glycans are attached at residues asparagine 76 and asparagine 89.

In terms of assembly, alpha-beta TR is a heterodimer composed of an alpha and beta chain; disulfide-linked. The alpha-beta TR is associated with the transmembrane signaling CD3 coreceptor proteins to form the TR-CD3 (TcR or TCR). The assembly of alpha-beta TR heterodimers with CD3 occurs in the endoplasmic reticulum where a single alpha-beta TR heterodimer associates with one CD3D-CD3E heterodimer, one CD3G-CD3E heterodimer and one CD247 homodimer forming a stable octameric structure. CD3D-CD3E and CD3G-CD3E heterodimers preferentially associate with TR alpha and TR beta chains, respectively. The association of the CD247 homodimer is the last step of TcR assembly in the endoplasmic reticulum and is required for transport to the cell surface.

The protein localises to the cell membrane. V region of the variable domain of T cell receptor (TR) beta chain that participates in the antigen recognition. Alpha-beta T cell receptors are antigen specific receptors which are essential to the immune response and are present on the cell surface of T lymphocytes. Recognize peptide-major histocompatibility (MH) (pMH) complexes that are displayed by antigen presenting cells (APC), a prerequisite for efficient T cell adaptive immunity against pathogens. Binding of alpha-beta TR to pMH complex initiates TR-CD3 clustering on the cell surface and intracellular activation of LCK that phosphorylates the ITAM motifs of CD3G, CD3D, CD3E and CD247 enabling the recruitment of ZAP70. In turn ZAP70 phosphorylates LAT, which recruits numerous signaling molecules to form the LAT signalosome. The LAT signalosome propagates signal branching to three major signaling pathways, the calcium, the mitogen-activated protein kinase (MAPK) kinase and the nuclear factor NF-kappa-B (NF-kB) pathways, leading to the mobilization of transcription factors that are critical for gene expression and essential for T cell growth and differentiation. The T cell repertoire is generated in the thymus, by V-(D)-J rearrangement. This repertoire is then shaped by intrathymic selection events to generate a peripheral T cell pool of self-MH restricted, non-autoaggressive T cells. Post-thymic interaction of alpha-beta TR with the pMH complexes shapes TR structural and functional avidity. The protein is T cell receptor beta variable 4-1 of Homo sapiens (Human).